The primary structure comprises 325 residues: Beta-ketoacyl-[acyl-carrier-protein] synthase III (325 aa).

Active-site residues include Cys-113 and His-250. The segment at 251-255 is ACP-binding; that stretch reads QANIR. Asn-280 is an active-site residue.

It belongs to the thiolase-like superfamily. FabH family. In terms of assembly, homodimer.

The protein resides in the cytoplasm. It catalyses the reaction malonyl-[ACP] + acetyl-CoA + H(+) = 3-oxobutanoyl-[ACP] + CO2 + CoA. It participates in lipid metabolism; fatty acid biosynthesis. Catalyzes the condensation reaction of fatty acid synthesis by the addition to an acyl acceptor of two carbons from malonyl-ACP. Catalyzes the first condensation reaction which initiates fatty acid synthesis and may therefore play a role in governing the total rate of fatty acid production. Possesses both acetoacetyl-ACP synthase and acetyl transacylase activities. Its substrate specificity determines the biosynthesis of branched-chain and/or straight-chain of fatty acids. This is Beta-ketoacyl-[acyl-carrier-protein] synthase III from Streptococcus suis (strain 98HAH33).